A 145-amino-acid chain; its full sequence is MDNKISTYSPAFSIVSWIALVGGIVTYLLGLWNAEMQLNEKGYYFAVLVLGLFSAASYQKTVRDKYEGIPTTSIYYMTCLTVFIISVALLMVGLWNATLLLSEKGFYGLAFFLSLFGAVAVQKNIRDAGINPPKETQVTQEEYSE.

Over 1–12 (MDNKISTYSPAF) the chain is Cytoplasmic. A helical transmembrane segment spans residues 13-32 (SIVSWIALVGGIVTYLLGLW). At 33–41 (NAEMQLNEK) the chain is on the periplasmic side. The helical transmembrane segment at 42 to 59 (GYYFAVLVLGLFSAASYQ) threads the bilayer. Topologically, residues 60–71 (KTVRDKYEGIPT) are cytoplasmic. A helical membrane pass occupies residues 72–94 (TSIYYMTCLTVFIISVALLMVGL). The Periplasmic segment spans residues 95-98 (WNAT). Residues 99-121 (LLLSEKGFYGLAFFLSLFGAVAV) traverse the membrane as a helical segment. At 122-145 (QKNIRDAGINPPKETQVTQEEYSE) the chain is on the cytoplasmic side.

It localises to the cell inner membrane. In Escherichia coli (strain K12), this protein is Inner membrane protein YiaA (yiaA).